We begin with the raw amino-acid sequence, 240 residues long: 1-(5-phosphoribosyl)-5-[(5-phosphoribosylamino)methylideneamino] imidazole-4-carboxamide isomerase (240 aa).

The active-site Proton acceptor is the aspartate 9. The active-site Proton donor is aspartate 131.

Belongs to the HisA/HisF family.

The protein resides in the cytoplasm. It carries out the reaction 1-(5-phospho-beta-D-ribosyl)-5-[(5-phospho-beta-D-ribosylamino)methylideneamino]imidazole-4-carboxamide = 5-[(5-phospho-1-deoxy-D-ribulos-1-ylimino)methylamino]-1-(5-phospho-beta-D-ribosyl)imidazole-4-carboxamide. It functions in the pathway amino-acid biosynthesis; L-histidine biosynthesis; L-histidine from 5-phospho-alpha-D-ribose 1-diphosphate: step 4/9. The polypeptide is 1-(5-phosphoribosyl)-5-[(5-phosphoribosylamino)methylideneamino] imidazole-4-carboxamide isomerase (Azobacteroides pseudotrichonymphae genomovar. CFP2).